A 503-amino-acid polypeptide reads, in one-letter code: 2-isopropylmalate synthase (503 aa).

A Pyruvate carboxyltransferase domain is found at 4–264 (LYIFDTTLRD…EVSIKTEEIY (261 aa)). Residues aspartate 13, histidine 201, histidine 203, and asparagine 237 each coordinate Mn(2+). The regulatory domain stretch occupies residues 388-503 (KLRHLQVVSG…NQLVMLKGKD (116 aa)).

This sequence belongs to the alpha-IPM synthase/homocitrate synthase family. LeuA type 1 subfamily. As to quaternary structure, homodimer. The cofactor is Mn(2+).

The protein localises to the cytoplasm. It catalyses the reaction 3-methyl-2-oxobutanoate + acetyl-CoA + H2O = (2S)-2-isopropylmalate + CoA + H(+). Its pathway is amino-acid biosynthesis; L-leucine biosynthesis; L-leucine from 3-methyl-2-oxobutanoate: step 1/4. In terms of biological role, catalyzes the condensation of the acetyl group of acetyl-CoA with 3-methyl-2-oxobutanoate (2-ketoisovalerate) to form 3-carboxy-3-hydroxy-4-methylpentanoate (2-isopropylmalate). This Dictyoglomus turgidum (strain DSM 6724 / Z-1310) protein is 2-isopropylmalate synthase.